Here is a 662-residue protein sequence, read N- to C-terminus: Glutathione hydrolase 7 (662 aa).

At 1-106 the chain is on the cytoplasmic side; sequence MAAENEASQE…AAECSCRQDG (106 aa). 4 positions are modified to phosphoserine: Ser-17, Ser-72, Ser-79, and Ser-83. Residues 26–90 form a disordered region; it reads SFPRLPEDEP…DGSPLRETRK (65 aa). The segment covering 72-83 has biased composition (low complexity); that stretch reads SSSSEMGSQDGS. A helical; Signal-anchor for type II membrane protein transmembrane segment spans residues 107–127; that stretch reads LTVIVTACLTFATGVTVALVM. Topologically, residues 128–662 are extracellular; it reads QIYFGDPQIF…SLDATGASIL (535 aa). 9 N-linked (GlcNAc...) asparagine glycosylation sites follow: Asn-198, Asn-267, Asn-283, Asn-330, Asn-353, Asn-394, Asn-519, Asn-523, and Asn-586.

The protein belongs to the gamma-glutamyltransferase family. In terms of assembly, heterodimer composed of the light and heavy chains. The active site is located in the light chain. Cleaved by autocatalysis into a large and a small subunit and the autocatalytic cleavage is essential to the functional activation of the enzyme.

The protein localises to the membrane. The enzyme catalyses an N-terminal (5-L-glutamyl)-[peptide] + an alpha-amino acid = 5-L-glutamyl amino acid + an N-terminal L-alpha-aminoacyl-[peptide]. It carries out the reaction glutathione + H2O = L-cysteinylglycine + L-glutamate. It catalyses the reaction an S-substituted glutathione + H2O = an S-substituted L-cysteinylglycine + L-glutamate. It participates in sulfur metabolism; glutathione metabolism. Its function is as follows. Hydrolyzes and transfers gamma-glutamyl moieties from glutathione and other gamma-glutamyl compounds to acceptors. The protein is Glutathione hydrolase 7 of Rattus norvegicus (Rat).